Here is a 556-residue protein sequence, read N- to C-terminus: Formate--tetrahydrofolate ligase (556 aa).

Thr-65–Ser-72 lines the ATP pocket.

The protein belongs to the formate--tetrahydrofolate ligase family.

It carries out the reaction (6S)-5,6,7,8-tetrahydrofolate + formate + ATP = (6R)-10-formyltetrahydrofolate + ADP + phosphate. Its pathway is one-carbon metabolism; tetrahydrofolate interconversion. The chain is Formate--tetrahydrofolate ligase from Clostridium perfringens (strain 13 / Type A).